The sequence spans 567 residues: Cytochrome P450 monooxygenase 79 (567 aa).

A helical membrane pass occupies residues 7–24 (ELAILAIVLLVTAVVFYT). N223 and N279 each carry an N-linked (GlcNAc...) asparagine glycan. Position 475 (C475) interacts with heme.

It belongs to the cytochrome P450 family. Heme serves as cofactor.

The protein resides in the membrane. It functions in the pathway secondary metabolite biosynthesis. Its function is as follows. Cytochrome P450 monooxygenase that is able to use dehydroabietic acid as a substrate for oxidation. In Postia placenta (strain ATCC 44394 / Madison 698-R) (Brown rot fungus), this protein is Cytochrome P450 monooxygenase 79.